We begin with the raw amino-acid sequence, 433 residues long: Pyrimidine-nucleoside phosphorylase (433 aa).

81–83 (KHS) contacts phosphate. K(+) contacts are provided by glycine 88 and threonine 90. Phosphate contacts are provided by residues threonine 92, 108–110 (KMS), and threonine 120. Substrate is bound by residues arginine 168 and lysine 187. K(+)-binding residues include leucine 243, alanine 246, and glutamate 255.

The protein belongs to the thymidine/pyrimidine-nucleoside phosphorylase family. As to quaternary structure, homodimer. The cofactor is K(+).

The catalysed reaction is uridine + phosphate = alpha-D-ribose 1-phosphate + uracil. It catalyses the reaction thymidine + phosphate = 2-deoxy-alpha-D-ribose 1-phosphate + thymine. It carries out the reaction 2'-deoxyuridine + phosphate = 2-deoxy-alpha-D-ribose 1-phosphate + uracil. In terms of biological role, catalyzes phosphorolysis of the pyrimidine nucleosides uridine, thymidine and 2'-deoxyuridine with the formation of the corresponding pyrimidine base and ribose-1-phosphate. The sequence is that of Pyrimidine-nucleoside phosphorylase (pdp) from Staphylococcus aureus (strain MSSA476).